The primary structure comprises 217 residues: tRNA (guanine-N(7)-)-methyltransferase (217 aa).

S-adenosyl-L-methionine is bound by residues Glu-43, Asp-68, Asn-101, and Asn-123. A substrate-binding site is contributed by Lys-127. Positions 129-134 (RHNKRR) are interaction with RNA. Substrate contacts are provided by residues Asp-159 and 196–199 (TEYE).

This sequence belongs to the class I-like SAM-binding methyltransferase superfamily. TrmB family.

It catalyses the reaction guanosine(46) in tRNA + S-adenosyl-L-methionine = N(7)-methylguanosine(46) in tRNA + S-adenosyl-L-homocysteine. It functions in the pathway tRNA modification; N(7)-methylguanine-tRNA biosynthesis. In terms of biological role, catalyzes the formation of N(7)-methylguanine at position 46 (m7G46) in tRNA. This chain is tRNA (guanine-N(7)-)-methyltransferase, found in Clostridium botulinum (strain Loch Maree / Type A3).